The primary structure comprises 477 residues: UDP-N-acetylmuramate--L-alanine ligase (477 aa).

122–128 (GTHGKTT) contacts ATP.

The protein belongs to the MurCDEF family.

The protein resides in the cytoplasm. It carries out the reaction UDP-N-acetyl-alpha-D-muramate + L-alanine + ATP = UDP-N-acetyl-alpha-D-muramoyl-L-alanine + ADP + phosphate + H(+). The protein operates within cell wall biogenesis; peptidoglycan biosynthesis. Cell wall formation. This is UDP-N-acetylmuramate--L-alanine ligase from Xylella fastidiosa (strain M12).